A 37-amino-acid polypeptide reads, in one-letter code: MRVQASVKRLCRNCKIVRRKGVVRVICIDPRHKQRQG.

Belongs to the bacterial ribosomal protein bL36 family.

This Aromatoleum aromaticum (strain DSM 19018 / LMG 30748 / EbN1) (Azoarcus sp. (strain EbN1)) protein is Large ribosomal subunit protein bL36.